The following is a 571-amino-acid chain: MDRSKRNSIAGFPPRVERLEEFEGGGGGEGNVSQVGRVWPSSYRALISAFSRLTRLDDFTCEKIGSGFFSEVFKVRHRASGQVMALKMNTLSSNRANMLKEVQLMNRLSHPNILRFMGVCVHQGQLHALTEYINSGNLEQLLDSNLHLPWTVRVKLAYDIAVGLSYLHFKGIFHRDLTSKNCLIKRDENGYSAVVADFGLAEKIPDVSMGSEKLAVVGSPFWMAPEVLRDEPYNEKADVFSYGIILCEIIARIQADPDYLPRTENFGLDYDAFQHMVGDCPPDFLQLTFNCCNMDPKLRPSFVEIGKTLEEILSRLQEEEQERDRKLQPTARGLLEKAPGVKRLSSLDDKIPHKSPCPRRTIWLSRSQSDIFSRKPPRTVSVLDPYYRPRDGAARTPKVNPFSARQDLMGGKIKFFDLPSKSVISLVFDLDAPGPGTMPLADWQEPLAPPIRRWRSLPGSPEFLHQEACPFVGREESLSDGPPPRLSSLKYRVKEIPPFRASALPAAQAHEAMDCSILQEENGFGSRPQGTSPCPAGASEEMEVEERPAGSTPATFSTSGIGLQTQGKQDG.

A Protein kinase domain is found at 58-313 (DFTCEKIGSG…EIGKTLEEIL (256 aa)). Residues 64 to 72 (IGSGFFSEV) and Lys-87 contribute to the ATP site. Asp-176 acts as the Proton acceptor in catalysis. Residue Ser-219 is modified to Phosphoserine; by autocatalysis. Phosphoserine occurs at positions 369, 456, and 460. Positions 521 to 571 (ENGFGSRPQGTSPCPAGASEEMEVEERPAGSTPATFSTSGIGLQTQGKQDG) are disordered. Positions 552-571 (TPATFSTSGIGLQTQGKQDG) are enriched in polar residues.

It belongs to the protein kinase superfamily. TKL Ser/Thr protein kinase family. Requires Mg(2+) as cofactor. Mn(2+) is required as a cofactor. In terms of tissue distribution, predominantly expressed in testis and prostate. Found predominantly in non-germinal Sertoli cells.

It localises to the nucleus. It catalyses the reaction L-seryl-[protein] + ATP = O-phospho-L-seryl-[protein] + ADP + H(+). The enzyme catalyses L-threonyl-[protein] + ATP = O-phospho-L-threonyl-[protein] + ADP + H(+). The catalysed reaction is L-tyrosyl-[protein] + ATP = O-phospho-L-tyrosyl-[protein] + ADP + H(+). With respect to regulation, activated by autophosphorylation on Ser-219. In terms of biological role, dual specificity protein kinase activity catalyzing autophosphorylation and phosphorylation of exogenous substrates on both serine/threonine and tyrosine residues. Phosphorylates cofilin at 'Ser-3'. May play an important role in spermatogenesis. This Homo sapiens (Human) protein is Dual specificity testis-specific protein kinase 2 (TESK2).